The sequence spans 197 residues: UPF0228 protein MA_3125 (197 aa).

This sequence belongs to the UPF0228 family.

This Methanosarcina acetivorans (strain ATCC 35395 / DSM 2834 / JCM 12185 / C2A) protein is UPF0228 protein MA_3125.